The primary structure comprises 386 residues: Succinate--CoA ligase [ADP-forming] subunit beta (386 aa).

ATP is bound by residues lysine 46, 53–55 (GRG), glutamate 99, glutamine 102, and glutamate 107. The Mg(2+) site is built by asparagine 199 and aspartate 213. Substrate contacts are provided by residues asparagine 264 and 321–323 (GIV).

This sequence belongs to the succinate/malate CoA ligase beta subunit family. In terms of assembly, heterotetramer of two alpha and two beta subunits. Requires Mg(2+) as cofactor.

The catalysed reaction is succinate + ATP + CoA = succinyl-CoA + ADP + phosphate. The enzyme catalyses GTP + succinate + CoA = succinyl-CoA + GDP + phosphate. It participates in carbohydrate metabolism; tricarboxylic acid cycle; succinate from succinyl-CoA (ligase route): step 1/1. Functionally, succinyl-CoA synthetase functions in the citric acid cycle (TCA), coupling the hydrolysis of succinyl-CoA to the synthesis of either ATP or GTP and thus represents the only step of substrate-level phosphorylation in the TCA. The beta subunit provides nucleotide specificity of the enzyme and binds the substrate succinate, while the binding sites for coenzyme A and phosphate are found in the alpha subunit. This chain is Succinate--CoA ligase [ADP-forming] subunit beta, found in Ruthia magnifica subsp. Calyptogena magnifica.